A 216-amino-acid polypeptide reads, in one-letter code: Phosphatidylserine decarboxylase proenzyme (216 aa).

Ser-182 serves as the catalytic Schiff-base intermediate with substrate; via pyruvic acid. The residue at position 182 (Ser-182) is a Pyruvic acid (Ser); by autocatalysis.

This sequence belongs to the phosphatidylserine decarboxylase family. PSD-A subfamily. In terms of assembly, heterodimer of a large membrane-associated beta subunit and a small pyruvoyl-containing alpha subunit. The cofactor is pyruvate. Post-translationally, is synthesized initially as an inactive proenzyme. Formation of the active enzyme involves a self-maturation process in which the active site pyruvoyl group is generated from an internal serine residue via an autocatalytic post-translational modification. Two non-identical subunits are generated from the proenzyme in this reaction, and the pyruvate is formed at the N-terminus of the alpha chain, which is derived from the carboxyl end of the proenzyme. The post-translation cleavage follows an unusual pathway, termed non-hydrolytic serinolysis, in which the side chain hydroxyl group of the serine supplies its oxygen atom to form the C-terminus of the beta chain, while the remainder of the serine residue undergoes an oxidative deamination to produce ammonia and the pyruvoyl prosthetic group on the alpha chain.

Its subcellular location is the cell membrane. The enzyme catalyses a 1,2-diacyl-sn-glycero-3-phospho-L-serine + H(+) = a 1,2-diacyl-sn-glycero-3-phosphoethanolamine + CO2. Its pathway is phospholipid metabolism; phosphatidylethanolamine biosynthesis; phosphatidylethanolamine from CDP-diacylglycerol: step 2/2. Functionally, catalyzes the formation of phosphatidylethanolamine (PtdEtn) from phosphatidylserine (PtdSer). The chain is Phosphatidylserine decarboxylase proenzyme from Burkholderia pseudomallei (strain 1106a).